Reading from the N-terminus, the 349-residue chain is GMP reductase (349 aa).

108 to 131 (IDFLKIKKIFLLSSELKYICIDVA) serves as a coordination point for NADP(+). K(+)-binding residues include Gly-181 and Gly-183. The active-site Thioimidate intermediate is Cys-186. 216-239 (IISDGGCTVSGDIAKAFGGGADFV) is a binding site for NADP(+).

It belongs to the IMPDH/GMPR family. GuaC type 1 subfamily. Homotetramer.

The enzyme catalyses IMP + NH4(+) + NADP(+) = GMP + NADPH + 2 H(+). Its function is as follows. Catalyzes the irreversible NADPH-dependent deamination of GMP to IMP. It functions in the conversion of nucleobase, nucleoside and nucleotide derivatives of G to A nucleotides, and in maintaining the intracellular balance of A and G nucleotides. This chain is GMP reductase, found in Buchnera aphidicola subsp. Acyrthosiphon pisum (strain Tuc7).